A 309-amino-acid chain; its full sequence is Malate dehydrogenase (309 aa).

Residues 6 to 11 (GSGRVG) and Asp-31 contribute to the NAD(+) site. Substrate is bound by residues Arg-80 and Arg-86. Residues Asn-93 and 116-118 (TTN) contribute to the NAD(+) site. The substrate site is built by Asn-118 and Arg-149. His-173 acts as the Proton acceptor in catalysis.

It belongs to the LDH/MDH superfamily.

It catalyses the reaction (S)-malate + NAD(+) = oxaloacetate + NADH + H(+). In terms of biological role, catalyzes the reversible oxidation of malate to oxaloacetate. This Pyrobaculum aerophilum (strain ATCC 51768 / DSM 7523 / JCM 9630 / CIP 104966 / NBRC 100827 / IM2) protein is Malate dehydrogenase (mdh).